Here is a 380-residue protein sequence, read N- to C-terminus: Alanine racemase (380 aa).

The Proton acceptor; specific for D-alanine role is filled by K34. K34 is subject to N6-(pyridoxal phosphate)lysine. Residue R135 coordinates substrate. Y267 (proton acceptor; specific for L-alanine) is an active-site residue. M315 is a substrate binding site.

It belongs to the alanine racemase family. Pyridoxal 5'-phosphate serves as cofactor.

The enzyme catalyses L-alanine = D-alanine. It participates in amino-acid biosynthesis; D-alanine biosynthesis; D-alanine from L-alanine: step 1/1. Its function is as follows. Catalyzes the interconversion of L-alanine and D-alanine. May also act on other amino acids. The protein is Alanine racemase (alr) of Lawsonia intracellularis (strain PHE/MN1-00).